Consider the following 348-residue polypeptide: Hereditary hemochromatosis protein (348 aa).

A signal peptide spans 1–22 (MGPRARPALLLLMLLQTAVLQG). Positions 23 to 114 (RLLRSHSLHY…IMENHNHSKE (92 aa)) are alpha-1. Topologically, residues 23–306 (RLLRSHSLHY…WEPSPSGTLV (284 aa)) are extracellular. N-linked (GlcNAc...) asparagine glycans are attached at residues N110, N130, and N234. The tract at residues 115–205 (SHTLQVILGC…ELGRGVLDQQ (91 aa)) is alpha-2. 2 disulfides stabilise this stretch: C124–C187 and C225–C282. The segment at 206–297 (VPPLVKVTHH…GLDQPLIVIW (92 aa)) is alpha-3. An Ig-like C1-type domain is found at 207–298 (PPLVKVTHHV…LDQPLIVIWE (92 aa)). Positions 298 to 306 (EPSPSGTLV) are connecting peptide. Residues 307-330 (IGVISGIAVFVVILFIGILFIILR) traverse the membrane as a helical segment. The Cytoplasmic segment spans residues 331–348 (KRQGSRGAMGHYVLAERE).

The protein belongs to the MHC class I family. As to quaternary structure, binds TFR through the extracellular domain in a pH-dependent manner. As to expression, expressed in all tissues tested except brain.

Its subcellular location is the cell membrane. In terms of biological role, binds to transferrin receptor (TFR) and reduces its affinity for iron-loaded transferrin. The polypeptide is Hereditary hemochromatosis protein (HFE) (Homo sapiens (Human)).